Consider the following 466-residue polypeptide: 3-isopropylmalate dehydratase large subunit (466 aa).

Residues cysteine 347, cysteine 407, and cysteine 410 each contribute to the [4Fe-4S] cluster site.

This sequence belongs to the aconitase/IPM isomerase family. LeuC type 1 subfamily. In terms of assembly, heterodimer of LeuC and LeuD. Requires [4Fe-4S] cluster as cofactor.

It catalyses the reaction (2R,3S)-3-isopropylmalate = (2S)-2-isopropylmalate. It participates in amino-acid biosynthesis; L-leucine biosynthesis; L-leucine from 3-methyl-2-oxobutanoate: step 2/4. Catalyzes the isomerization between 2-isopropylmalate and 3-isopropylmalate, via the formation of 2-isopropylmaleate. The polypeptide is 3-isopropylmalate dehydratase large subunit (Shewanella pealeana (strain ATCC 700345 / ANG-SQ1)).